Here is a 981-residue protein sequence, read N- to C-terminus: Protein deadlock (981 aa).

Residues 1-60 are required for interaction with rhi/rhino; it reads MEKLDKIRMSQKLSCWQHILTTLGTSSKTEQEWNTFFKGFLESWRKPYCIQTSCDPSIPL. 6 disordered regions span residues 72–195, 274–307, 327–352, 375–446, 554–586, and 642–662; these read LQEN…ACAP, IMDK…DDQL, SRNE…NKKE, LRKS…PNNI, GLDD…ETLK, and LVHQ…TAAR. Polar residues-rich tracts occupy residues 104–113 and 150–160; these read PSKSHSTGST and NHTTSIFSKAQ. Over residues 167–191 the composition is skewed to basic and acidic residues; sequence KLSSTKKRPDTCAPTDDSRKNREPR. The span at 337-352 shows a compositional bias: basic and acidic residues; it reads EKVKLKGERPAQNKKE. Over residues 377–390 the composition is skewed to basic residues; sequence KSVKKSAKQQKPRV. Residues 409–419 are compositionally biased toward basic and acidic residues; the sequence is TQDKQSTHEMI. Positions 422–446 are enriched in polar residues; sequence QAKTISEASGQQTSQVQSSLSPNNI. The span at 652–662 shows a compositional bias: basic and acidic residues; the sequence is RNQRDEATAAR.

In terms of assembly, component of the Rhino-Deadlock-Cutoff (RDC) complex, composed of rhi/rhino, del/deadlock and cuff/cutoff. Interacts (via N-terminus) with rhi/rhino (via C-terminus); this interaction is direct. Interacts (via C-terminus) with cuff/cutoff; this interaction is direct.

Its subcellular location is the nucleus. It localises to the cytoplasm. It is found in the cytoskeleton. The protein localises to the microtubule organizing center. The protein resides in the centrosome. Its subcellular location is the chromosome. Developmental protein involved in oogenesis. Required for germline maintenance, stability of mitotic spindles, localization of patterning determinants, oocyte growth and fusome biogenesis in males and females. Also required for dorso-ventral and antero-posterior patterning of oocyte and eggshell. May be involved in microtubule function during oogenesis. Part of a rhi-dependent transcription machinery that enables the generation of piRNA precursors from heterochromatin while maintaining the suppression of transposon-encoded promoters and enhancers. Component of the RDC complex (rhi, del and cuff) which binds to repressive H3K9me3 marks in the piRNA clusters. RDC promotes the bidirectional transcription of piRNA clusters at these sites by interacting with Moonshiner which forms a complex with the transcription initiation factors TfIIA-S and Trf2. This mechanism allows transcription to occur in piRNA clusters despite the lack of proper promoter elements and in the presence of the repressive H3K9me3 mark. As part of the RDC complex, involved in suppression of splicing. The chain is Protein deadlock (del) from Drosophila melanogaster (Fruit fly).